The primary structure comprises 432 residues: Glutamate--cysteine ligase EgtA (432 aa).

Belongs to the glutamate--cysteine ligase type 2 family. EgtA subfamily.

The catalysed reaction is L-cysteine + L-glutamate + ATP = gamma-L-glutamyl-L-cysteine + ADP + phosphate + H(+). The protein operates within amino-acid biosynthesis; ergothioneine biosynthesis. Its function is as follows. Catalyzes the synthesis of gamma-glutamylcysteine (gamma-GC) which is used as substrate for the biosynthesis of the low-molecular thiol compound ergothioneine (ERG). ERG is one of the major redox buffers which protects bacteria against redox stressors and antibiotics; loss of ERG or mycothiol (MSH, the other major redox buffer in this bacteria) leads to respiratory alterations and bioenergetic deficiencies that negatively impact virulence. This is Glutamate--cysteine ligase EgtA (egtA) from Mycobacterium tuberculosis (strain CDC 1551 / Oshkosh).